The chain runs to 474 residues: Glutamate--tRNA ligase 2 (474 aa).

Positions 16–26 (PSPTGFLHIGG) match the 'HIGH' region motif. Residues 245-249 (KLSKR) carry the 'KMSKS' region motif. Residue lysine 248 participates in ATP binding.

This sequence belongs to the class-I aminoacyl-tRNA synthetase family. Glutamate--tRNA ligase type 1 subfamily. As to quaternary structure, monomer.

The protein resides in the cytoplasm. The catalysed reaction is tRNA(Glu) + L-glutamate + ATP = L-glutamyl-tRNA(Glu) + AMP + diphosphate. Functionally, catalyzes the attachment of glutamate to tRNA(Glu) in a two-step reaction: glutamate is first activated by ATP to form Glu-AMP and then transferred to the acceptor end of tRNA(Glu). The polypeptide is Glutamate--tRNA ligase 2 (Rhizorhabdus wittichii (strain DSM 6014 / CCUG 31198 / JCM 15750 / NBRC 105917 / EY 4224 / RW1) (Sphingomonas wittichii)).